Here is a 194-residue protein sequence, read N- to C-terminus: dCTP deaminase (194 aa).

DCTP contacts are provided by residues 110–115 (RSSLAR), Asp-128, 136–138 (VLE), Tyr-171, Lys-178, and Gln-182. The active-site Proton donor/acceptor is Glu-138.

This sequence belongs to the dCTP deaminase family. In terms of assembly, homotrimer.

The catalysed reaction is dCTP + H2O + H(+) = dUTP + NH4(+). It functions in the pathway pyrimidine metabolism; dUMP biosynthesis; dUMP from dCTP (dUTP route): step 1/2. Catalyzes the deamination of dCTP to dUTP. The protein is dCTP deaminase of Histophilus somni (strain 2336) (Haemophilus somnus).